Here is a 1062-residue protein sequence, read N- to C-terminus: Carbamoyl phosphate synthase large chain (1062 aa).

The tract at residues 1–401 is carboxyphosphate synthetic domain; that stretch reads MPKRTDIHKI…AMQKAVQSLE (401 aa). Residues Arg-129, Arg-169, Gly-175, Gly-176, Lys-208, Ile-210, Glu-215, Gly-241, Ile-242, His-243, Gln-284, and Glu-298 each contribute to the ATP site. The region spanning 133–327 is the ATP-grasp 1 domain; sequence KELCQKLGEP…IAKMAAKIAI (195 aa). The Mg(2+) site is built by Gln-284, Glu-298, and Asn-300. Gln-284, Glu-298, and Asn-300 together coordinate Mn(2+). The oligomerization domain stretch occupies residues 402–546; that stretch reads IDEKDLYSAK…YSTYDGENES (145 aa). Positions 547–929 are carbamoyl phosphate synthetic domain; the sequence is RKSGKKSVIV…ALYKAFAGAK (383 aa). The ATP-grasp 2 domain occupies 671 to 861; it reads DQIIKSLHLH…MAQVATRVIM (191 aa). 10 residues coordinate ATP: Arg-707, Asp-746, Leu-748, Glu-752, Gly-777, Val-778, His-779, Ser-780, Gln-820, and Glu-832. The Mg(2+) site is built by Gln-820, Glu-832, and Asn-834. Positions 820, 832, and 834 each coordinate Mn(2+). The MGS-like domain occupies 930–1062; the sequence is MQLPENGNVL…NRSFATDALK (133 aa). Residues 930–1062 form an allosteric domain region; that stretch reads MQLPENGNVL…NRSFATDALK (133 aa).

This sequence belongs to the CarB family. As to quaternary structure, composed of two chains; the small (or glutamine) chain promotes the hydrolysis of glutamine to ammonia, which is used by the large (or ammonia) chain to synthesize carbamoyl phosphate. Tetramer of heterodimers (alpha,beta)4. Mg(2+) is required as a cofactor. Mn(2+) serves as cofactor.

It catalyses the reaction hydrogencarbonate + L-glutamine + 2 ATP + H2O = carbamoyl phosphate + L-glutamate + 2 ADP + phosphate + 2 H(+). The enzyme catalyses hydrogencarbonate + NH4(+) + 2 ATP = carbamoyl phosphate + 2 ADP + phosphate + 2 H(+). The protein operates within amino-acid biosynthesis; L-arginine biosynthesis; carbamoyl phosphate from bicarbonate: step 1/1. Its pathway is pyrimidine metabolism; UMP biosynthesis via de novo pathway; (S)-dihydroorotate from bicarbonate: step 1/3. Its function is as follows. Large subunit of the glutamine-dependent carbamoyl phosphate synthetase (CPSase). CPSase catalyzes the formation of carbamoyl phosphate from the ammonia moiety of glutamine, carbonate, and phosphate donated by ATP, constituting the first step of 2 biosynthetic pathways, one leading to arginine and/or urea and the other to pyrimidine nucleotides. The large subunit (synthetase) binds the substrates ammonia (free or transferred from glutamine from the small subunit), hydrogencarbonate and ATP and carries out an ATP-coupled ligase reaction, activating hydrogencarbonate by forming carboxy phosphate which reacts with ammonia to form carbamoyl phosphate. This is Carbamoyl phosphate synthase large chain from Lactobacillus delbrueckii subsp. bulgaricus (strain ATCC BAA-365 / Lb-18).